The following is a 326-amino-acid chain: Eukaryotic translation initiation factor 2 subunit 1 (326 aa).

The 72-residue stretch at 24-95 folds into the S1 motif domain; the sequence is DDLIMVKVNR…QKGYIDLSKR (72 aa). Residue Ser59 is modified to Phosphoserine; by eIK1, eIK2 and PK4. A disordered region spans residues 291-326; sequence LDKHDGLSSDDEYSSDGDEDDSSNDDDNSSDEDDDD. Residues 298–326 show a composition bias toward acidic residues; that stretch reads SSDDEYSSDGDEDDSSNDDDNSSDEDDDD.

This sequence belongs to the eIF-2-alpha family. Post-translationally, phosphorylates at Ser-59 in mature trophozoites, schizonts and gametocytes but not in rings and young trophozoites. Phosphorylates at Ser-59 by eIK2 in salivary gland sporozoites but not in midgut and hemocoel sporozoites. Dephosphorylated at Ser-59 by UIS2. Phosphorylation of eIF2alpha subunit of the pre-initiation complex eIF2 inhibits recycling of inactive eIF2-GDP to active eIF2-GTP by limiting the activity of the guanine nucleotide exchange factor eIF2B and thus, inhibits protein translation.

It is found in the cytoplasm. The protein localises to the stress granule. In terms of biological role, functions in the early steps of protein synthesis by forming a ternary complex with GTP and initiator tRNA. May regulate protein translation in response to amino acid starvation. May regulate protein at various stages of parasite development. The polypeptide is Eukaryotic translation initiation factor 2 subunit 1 (Plasmodium berghei (strain Anka)).